We begin with the raw amino-acid sequence, 129 residues long: uncharacterized protein (129 aa).

This is an uncharacterized protein from Haemophilus influenzae (strain ATCC 51907 / DSM 11121 / KW20 / Rd).